The sequence spans 188 residues: Nicotinamide-nucleotide adenylyltransferase (188 aa).

This sequence belongs to the archaeal NMN adenylyltransferase family.

It is found in the cytoplasm. The catalysed reaction is beta-nicotinamide D-ribonucleotide + ATP + H(+) = diphosphate + NAD(+). It functions in the pathway cofactor biosynthesis; NAD(+) biosynthesis; NAD(+) from nicotinamide D-ribonucleotide: step 1/1. The protein is Nicotinamide-nucleotide adenylyltransferase of Pyrococcus furiosus (strain ATCC 43587 / DSM 3638 / JCM 8422 / Vc1).